The primary structure comprises 89 residues: Small ribosomal subunit protein uS15 (89 aa).

It belongs to the universal ribosomal protein uS15 family. Part of the 30S ribosomal subunit. Forms a bridge to the 50S subunit in the 70S ribosome, contacting the 23S rRNA.

Functionally, one of the primary rRNA binding proteins, it binds directly to 16S rRNA where it helps nucleate assembly of the platform of the 30S subunit by binding and bridging several RNA helices of the 16S rRNA. Its function is as follows. Forms an intersubunit bridge (bridge B4) with the 23S rRNA of the 50S subunit in the ribosome. In Desulforudis audaxviator (strain MP104C), this protein is Small ribosomal subunit protein uS15.